The chain runs to 264 residues: Anamorsin homolog 2 (264 aa).

The interval 1 to 142 (MAATAAALAV…KVSWSMGSSF (142 aa)) is N-terminal SAM-like domain. Residues 143–174 (PLKKATKGLPKIQIDDDSELIDEDSLLTEDDL) form a linker region. Positions 185, 194, 197, and 199 each coordinate [2Fe-2S] cluster. Residues 185–199 (CEVGATRKACKNCTC) form a fe-S binding site A region. Residues cysteine 225, cysteine 228, cysteine 236, and cysteine 239 each coordinate [4Fe-4S] cluster. 2 short sequence motifs (cx2C motif) span residues 225–228 (CGNC) and 236–239 (CGTC). The segment at 225–239 (CGNCGLGDAFRCGTC) is fe-S binding site B.

The protein belongs to the anamorsin family. In terms of assembly, monomer. It depends on [2Fe-2S] cluster as a cofactor. Requires [4Fe-4S] cluster as cofactor.

Its subcellular location is the cytoplasm. The protein resides in the mitochondrion intermembrane space. In terms of biological role, component of the cytosolic iron-sulfur (Fe-S) protein assembly (CIA) machinery. Required for the maturation of extramitochondrial Fe-S proteins. Part of an electron transfer chain functioning in an early step of cytosolic Fe-S biogenesis, facilitating the de novo assembly of a [4Fe-4S] cluster on the cytosolic Fe-S scaffold complex. Electrons are transferred from NADPH via a FAD- and FMN-containing diflavin oxidoreductase. Together with the diflavin oxidoreductase, also required for the assembly of the diferric tyrosyl radical cofactor of ribonucleotide reductase (RNR), probably by providing electrons for reduction during radical cofactor maturation in the catalytic small subunit. This chain is Anamorsin homolog 2, found in Oryza sativa subsp. japonica (Rice).